A 257-amino-acid polypeptide reads, in one-letter code: Zinc transporter ZupT (257 aa).

The next 3 membrane-spanning stretches (helical) occupy residues 5 to 25, 32 to 52, and 61 to 81; these read LILTILAGAATFIGAFLGVLG, LLAFSLGFAAGIMLLISLMEM, and GMSPVLGYGMFIFGLLGYFGL. Residues Asn120 and Glu123 each contribute to the Fe(2+) site. Residues Glu123 and His148 each contribute to the Zn(2+) site. The next 4 helical transmembrane spans lie at 137–157, 171–191, 195–215, and 236–256; these read LGFGIALAVALHNIPEGLAVA, ILWAGISGLAEILGGVLAWLI, MISPVVMAAIMAAVAGIMVAL, and GVLCGMSVMGFSLVLLQTAGI. The Fe(2+) site is built by Asn149, Glu152, and Glu181. A Zn(2+)-binding site is contributed by Glu152.

Belongs to the ZIP transporter (TC 2.A.5) family. ZupT subfamily.

It is found in the cell inner membrane. The catalysed reaction is Zn(2+)(in) = Zn(2+)(out). Functionally, mediates zinc uptake. May also transport other divalent cations. The polypeptide is Zinc transporter ZupT (Escherichia coli O45:K1 (strain S88 / ExPEC)).